A 239-amino-acid chain; its full sequence is Ribosomal RNA small subunit methyltransferase G (239 aa).

Residues Gly-78, Phe-83, 129-130 (AE), and Arg-148 each bind S-adenosyl-L-methionine.

This sequence belongs to the methyltransferase superfamily. RNA methyltransferase RsmG family.

The protein resides in the cytoplasm. Specifically methylates the N7 position of a guanine in 16S rRNA. This is Ribosomal RNA small subunit methyltransferase G from Clostridium botulinum (strain Loch Maree / Type A3).